The following is a 169-amino-acid chain: Putative ribonuclease VapC50 (169 aa).

Functionally, toxic component of a type II toxin-antitoxin (TA) system. An RNase. The cognate antitoxin is VapB50. In Mycobacterium tuberculosis (strain ATCC 25618 / H37Rv), this protein is Putative ribonuclease VapC50.